A 295-amino-acid chain; its full sequence is UDP-3-O-acyl-N-acetylglucosamine deacetylase (295 aa).

The Zn(2+) site is built by histidine 75, histidine 232, and aspartate 236. Residue histidine 259 is the Proton donor of the active site.

It belongs to the LpxC family. The cofactor is Zn(2+).

It carries out the reaction a UDP-3-O-[(3R)-3-hydroxyacyl]-N-acetyl-alpha-D-glucosamine + H2O = a UDP-3-O-[(3R)-3-hydroxyacyl]-alpha-D-glucosamine + acetate. Its pathway is glycolipid biosynthesis; lipid IV(A) biosynthesis; lipid IV(A) from (3R)-3-hydroxytetradecanoyl-[acyl-carrier-protein] and UDP-N-acetyl-alpha-D-glucosamine: step 2/6. Catalyzes the hydrolysis of UDP-3-O-myristoyl-N-acetylglucosamine to form UDP-3-O-myristoylglucosamine and acetate, the committed step in lipid A biosynthesis. The protein is UDP-3-O-acyl-N-acetylglucosamine deacetylase of Helicobacter pylori (strain ATCC 700392 / 26695) (Campylobacter pylori).